Reading from the N-terminus, the 187-residue chain is Thermosensitive gluconokinase (187 aa).

10–17 (GVSGSGKT) lines the ATP pocket.

It belongs to the gluconokinase GntK/GntV family.

The enzyme catalyses D-gluconate + ATP = 6-phospho-D-gluconate + ADP + H(+). It participates in carbohydrate acid metabolism; L-idonate degradation. The chain is Thermosensitive gluconokinase (idnK) from Escherichia coli (strain K12).